We begin with the raw amino-acid sequence, 501 residues long: Lysine--tRNA ligase (501 aa).

Residues glutamate 404 and glutamate 411 each contribute to the Mg(2+) site.

The protein belongs to the class-II aminoacyl-tRNA synthetase family. Homodimer. Requires Mg(2+) as cofactor.

It localises to the cytoplasm. It carries out the reaction tRNA(Lys) + L-lysine + ATP = L-lysyl-tRNA(Lys) + AMP + diphosphate. The sequence is that of Lysine--tRNA ligase from Campylobacter jejuni subsp. jejuni serotype O:6 (strain 81116 / NCTC 11828).